Here is a 551-residue protein sequence, read N- to C-terminus: Prunin 1 Pru du 6.0101 (551 aa).

The first 20 residues, 1-20 (MAKAFVFSLCLLLVFNGCLA), serve as a signal peptide directing secretion. 2 disulfides stabilise this stretch: Cys32–Cys65 and Cys108–Cys374. Residues 37 to 312 (LQAREPDNRI…ALNVNEETAR (276 aa)) enclose the Cupin type-1 1 domain. Disordered regions lie at residues 111–194 (TFEE…QKTR), 238–293 (NPRK…NVFS), and 311–361 (ARNL…QQQG). Composition is skewed to low complexity over residues 114–124 (ESQQSSQQGRQ), 132–148 (QQQQ…QQEQ), and 168–185 (QEQQ…QQFR). 4 igE-binding regions span residues 118-132 (SSQQ…QERQ), 145-159 (QQEQ…QQGR), 161-175 (QQEE…QGQQ), and 225-239 (LFHV…DQNP). The span at 254 to 275 (QQGQSQPRQQGEQGRPGQHQQP) shows a compositional bias: low complexity. Residues 281-295 (QQEQQGSGNNVFSGF) are igE-binding. Composition is skewed to polar residues over residues 282 to 293 (QEQQGSGNNVFS) and 311 to 323 (ARNL…NRNQ). Residues 339–350 (GRQEREHEERQQ) show a composition bias toward basic and acidic residues. The span at 351 to 361 (EQLQQERQQQG) shows a compositional bias: low complexity. Residues 367–372 (NGLEET) carry the NGXEET; peptidase recognition motif motif. The Cupin type-1 2 domain occupies 380 to 529 (ENIGNPERAD…AYQISREQAR (150 aa)). The tract at residues 510–524 (RALPDEVLANAYQIS) is igE-binding.

The protein belongs to the 11S seed storage protein (globulins) family. As to quaternary structure, hexamer of two trimers; each subunit is composed of an acidic and a basic chain derived from a single precursor and linked by a disulfide bond. Proteolytically processed from a single precursor to produce an acidic and a basic chain that are linked by a disulfide bond. As to expression, expressed in seed (at protein level).

Seed storage protein. This Prunus dulcis (Almond) protein is Prunin 1 Pru du 6.0101.